Consider the following 433-residue polypeptide: Histidine--tRNA ligase (433 aa).

Belongs to the class-II aminoacyl-tRNA synthetase family. As to quaternary structure, homodimer.

It is found in the cytoplasm. It catalyses the reaction tRNA(His) + L-histidine + ATP = L-histidyl-tRNA(His) + AMP + diphosphate + H(+). This is Histidine--tRNA ligase from Azoarcus sp. (strain BH72).